A 111-amino-acid polypeptide reads, in one-letter code: Large ribosomal subunit protein uL23 (111 aa).

Belongs to the universal ribosomal protein uL23 family. Part of the 50S ribosomal subunit. Contacts protein L29, and trigger factor when it is bound to the ribosome.

One of the early assembly proteins it binds 23S rRNA. One of the proteins that surrounds the polypeptide exit tunnel on the outside of the ribosome. Forms the main docking site for trigger factor binding to the ribosome. The protein is Large ribosomal subunit protein uL23 of Chlamydia felis (strain Fe/C-56) (Chlamydophila felis).